The following is a 146-amino-acid chain: Large ribosomal subunit protein uL15 (146 aa).

Basic and acidic residues predominate over residues methionine 1–arginine 13. Positions methionine 1–glutamate 51 are disordered. Gly residues-rich tracts occupy residues arginine 21 to alanine 31 and serine 42 to glutamate 51.

It belongs to the universal ribosomal protein uL15 family. Part of the 50S ribosomal subunit.

In terms of biological role, binds to the 23S rRNA. This Bacillus mycoides (strain KBAB4) (Bacillus weihenstephanensis) protein is Large ribosomal subunit protein uL15.